Consider the following 500-residue polypeptide: Monocarboxylate transporter 1 (500 aa).

The Cytoplasmic portion of the chain corresponds to Met-1–Val-22. A helical transmembrane segment spans residues Val-23–Phe-44. Lys-38 contributes to the (S)-lactate binding site. The Extracellular segment spans residues Lys-45 to Thr-55. A helical membrane pass occupies residues Ser-56–Val-80. Residues Asn-81–Gly-84 lie on the Cytoplasmic side of the membrane. Residues Ser-85 to Phe-105 traverse the membrane as a helical segment. Over Cys-106 to Val-109 the chain is Extracellular. Residues Gln-110 to Leu-132 traverse the membrane as a helical segment. The Cytoplasmic segment spans residues Thr-133–Ala-146. A helical transmembrane segment spans residues Asn-147–Phe-169. Residues Gly-170 to Trp-174 lie on the Extracellular side of the membrane. The helical transmembrane segment at Arg-175–Leu-194 threads the bilayer. At Met-195–Arg-261 the chain is on the cytoplasmic side. Phosphoserine occurs at positions 210 and 213. Thr-231 carries the phosphothreonine modification. The chain crosses the membrane as a helical span at residues Gly-262–Gly-288. Over Lys-289–Ser-295 the chain is Extracellular. Residues Glu-296–Gly-317 traverse the membrane as a helical segment. Asp-309 provides a ligand contact to H(+). Arg-313 contributes to the (S)-lactate binding site. The Cytoplasmic segment spans residues Leu-318–Arg-328. The chain crosses the membrane as a helical span at residues Ile-329 to Leu-349. At Ser-350–Tyr-353 the chain is on the extracellular side. Residues Val-354–Phe-375 traverse the membrane as a helical segment. Residues Glu-376–Ser-389 lie on the Cytoplasmic side of the membrane. Residues Ala-390–Gly-410 traverse the membrane as a helical segment. The Extracellular segment spans residues Arg-411–Tyr-421. A helical transmembrane segment spans residues Thr-422–Ile-443. Residues Asn-444–Val-500 lie on the Cytoplasmic side of the membrane. The segment covering Ala-454–Glu-465 has biased composition (basic and acidic residues). The interval Ala-454–Val-500 is disordered. At Ser-461 the chain carries Phosphoserine. At Thr-466 the chain carries Phosphothreonine. 3 positions are modified to phosphoserine: Ser-467, Ser-483, and Ser-498. Residues Glu-482–Val-500 show a composition bias toward basic and acidic residues.

Belongs to the major facilitator superfamily. Monocarboxylate porter (TC 2.A.1.13) family. Interacts with EMB; interaction mediates SLC16A1 targeting to the plasma membrane. Interacts with isoform 2 of BSG; interaction mediates SLC16A1 targeting to the plasma membrane. Widely expressed. Detected in heart and in blood lymphocytes and monocytes (at protein level).

It localises to the cell membrane. The protein resides in the basolateral cell membrane. It is found in the apical cell membrane. The enzyme catalyses (S)-lactate(in) + H(+)(in) = (S)-lactate(out) + H(+)(out). The catalysed reaction is acetate(out) + H(+)(out) = acetate(in) + H(+)(in). It carries out the reaction acetoacetate(out) + H(+)(out) = acetoacetate(in) + H(+)(in). It catalyses the reaction pyruvate(out) + H(+)(out) = pyruvate(in) + H(+)(in). The enzyme catalyses (R)-3-hydroxybutanoate(out) + H(+)(out) = (R)-3-hydroxybutanoate(in) + H(+)(in). The catalysed reaction is 3-methyl-2-oxobutanoate(out) + H(+)(out) = 3-methyl-2-oxobutanoate(in) + H(+)(in). It carries out the reaction 4-methyl-2-oxopentanoate(out) + H(+)(out) = 4-methyl-2-oxopentanoate(in) + H(+)(in). It catalyses the reaction succinate(in) + 2 H(+)(in) = succinate(out) + 2 H(+)(out). Selectively inhibited by AZD3965, that acts as a competitive inhibitor binding to the central channel in the outward open conformation. Functionally, bidirectional proton-coupled monocarboxylate transporter. Catalyzes the rapid transport across the plasma membrane of many monocarboxylates such as lactate, pyruvate, acetate and the ketone bodies acetoacetate and beta-hydroxybutyrate, and thus contributes to the maintenance of intracellular pH. The transport direction is determined by the proton motive force and the concentration gradient of the substrate monocarboxylate. MCT1 is a major lactate exporter. Plays a role in cellular responses to a high-fat diet by modulating the cellular levels of lactate and pyruvate that contribute to the regulation of central metabolic pathways and insulin secretion, with concomitant effects on plasma insulin levels and blood glucose homeostasis. Facilitates the protonated monocarboxylate form of succinate export, that its transient protonation upon muscle cell acidification in exercising muscle and ischemic heart. Functions via alternate outward- and inward-open conformation states. Protonation and deprotonation of 309-Asp is essential for the conformational transition. This is Monocarboxylate transporter 1 from Homo sapiens (Human).